A 346-amino-acid chain; its full sequence is Dehydrogenase azaJ (346 aa).

An NADP(+)-binding site is contributed by 43–48; sequence VDYATQ. 133–140 contributes to the substrate binding site; it reads LAFSTAIV. NADP(+) is bound by residues 170 to 173, 193 to 196, tyrosine 211, and 251 to 252; these read ATSV, SPHN, and LN. 269-273 is a substrate binding site; the sequence is APPNV. Position 336–337 (336–337) interacts with NADP(+); sequence VS.

It belongs to the zinc-containing alcohol dehydrogenase family.

It functions in the pathway secondary metabolite biosynthesis. Dehydrogenase; part of the gene cluster that mediates the biosynthesis of azaphilones, a class of fungal metabolites characterized by a highly oxygenated pyrano-quinone bicyclic core and exhibiting a broad range of bioactivities. In the first step, the non-reducing polyketide synthase azaA forms the hexaketide precursor from successive condensations of five malonyl-CoA units, presumably with a simple acetyl-CoA starter unit. The reactive polyketide chain then undergoes a PT-mediated C2-C7 cyclization to afford the aromatic ring and is eventually released as an aldehyde through the R-domain. The putative ketoreductase azaE is proposed to catalyze the reduction of the terminal ketone resulting in the early culture product FK17-P2a. The monooxygenase azaH was demonstrated to be the only enzyme required to convert FK17-P2a to azanigerone E. AzaH first hydroxylates the benzaldehyde intermediate FK17-P2a at C4, which triggers the formation of the pyran-ring to afford azanigerone E. In parallel, the 2,4-dimethylhexanoyl chain is synthesized by the HR-PKS azaB and is proposed to be transferred to the C4-hydroxyl of azanigerone E by the acyltransferase azaD directly from the ACP domain of azaB. Alternatively, the 2,4-dimethyl-hexanoyl chain may be offloaded from the HR-PKS as a carboxylic acid and converted to an acyl-CoA by azaF. The resulting acyl-CoA molecule could then be taken up as a substrate by AzaD to form azanigerone B. To yield the carboxylic acid substituent in azanigerone A, the hydroxypropyl side chain of azanigerone B would need to undergo a C-C oxidative cleavage catalyzed by cytochrome P450 AzaI. AzaI is proposed to act on a vicinal diol that leads to a C-C bond scission either through an alkoxyradical intermediate or a peroxy complex. In the biosynthesis of azanigerone A, azanigerone B first undergoes hydroxylation at C10, possibly catalyzed by one of the two FAD-dependent monooxygenases encoded in the cluster, azaG or azaL, resulting in the vicinal diol azanigerone C. Oxidative cleavage of azanigerone C by azaI would yield the corresponding aldehyde derivative of azanigerone A. Finally, the dehydrogenase azaJ is proposed to convert the aldehyde functional group into the carboxylic acid, completing the conversion from azanigerone B to azanigerone A. Alternatively, the oxidation of aldehyde to carboxylic acid may be catalyzed by the same P450 enzyme azaI via consecutive oxidation or by endogenous alcohol dehydrogenase. This chain is Dehydrogenase azaJ, found in Aspergillus niger (strain ATCC 1015 / CBS 113.46 / FGSC A1144 / LSHB Ac4 / NCTC 3858a / NRRL 328 / USDA 3528.7).